Reading from the N-terminus, the 174-residue chain is Peptide deformylase (174 aa).

Cys-96 and His-138 together coordinate Fe cation. The active site involves Glu-139. A Fe cation-binding site is contributed by His-142.

The protein belongs to the polypeptide deformylase family. It depends on Fe(2+) as a cofactor.

The enzyme catalyses N-terminal N-formyl-L-methionyl-[peptide] + H2O = N-terminal L-methionyl-[peptide] + formate. Removes the formyl group from the N-terminal Met of newly synthesized proteins. Requires at least a dipeptide for an efficient rate of reaction. N-terminal L-methionine is a prerequisite for activity but the enzyme has broad specificity at other positions. This Nautilia profundicola (strain ATCC BAA-1463 / DSM 18972 / AmH) protein is Peptide deformylase.